A 282-amino-acid polypeptide reads, in one-letter code: Aminoglycoside 6-adenylyltransferase (282 aa).

It carries out the reaction streptomycin + ATP = 6-O-adenylylstreptomycin + diphosphate. In terms of biological role, required for streptomycin resistance. Adenylates streptomycin on the O-6 residue. In Staphylococcus aureus, this protein is Aminoglycoside 6-adenylyltransferase.